The following is a 217-amino-acid chain: Translation initiation factor IF-3 (217 aa).

A disordered region spans residues 179–217 (PRKTPLVKKEEKEAAPTKAVRTIPAPPRPTAAKVAAQQA).

It belongs to the IF-3 family. As to quaternary structure, monomer.

Its subcellular location is the cytoplasm. Its function is as follows. IF-3 binds to the 30S ribosomal subunit and shifts the equilibrium between 70S ribosomes and their 50S and 30S subunits in favor of the free subunits, thus enhancing the availability of 30S subunits on which protein synthesis initiation begins. In Parasynechococcus marenigrum (strain WH8102), this protein is Translation initiation factor IF-3.